The following is a 42-amino-acid chain: Photosystem I reaction center subunit IX (42 aa).

The chain crosses the membrane as a helical span at residues 7 to 27; the sequence is YLSTAPVLATLWFGFLAGLLI.

It belongs to the PsaJ family.

It is found in the plastid. It localises to the chloroplast thylakoid membrane. In terms of biological role, may help in the organization of the PsaE and PsaF subunits. The chain is Photosystem I reaction center subunit IX from Psilotum nudum (Whisk fern).